A 188-amino-acid polypeptide reads, in one-letter code: Elongation factor P (188 aa).

Belongs to the elongation factor P family.

It is found in the cytoplasm. Its pathway is protein biosynthesis; polypeptide chain elongation. In terms of biological role, involved in peptide bond synthesis. Stimulates efficient translation and peptide-bond synthesis on native or reconstituted 70S ribosomes in vitro. Probably functions indirectly by altering the affinity of the ribosome for aminoacyl-tRNA, thus increasing their reactivity as acceptors for peptidyl transferase. In Rickettsia massiliae (strain Mtu5), this protein is Elongation factor P.